A 68-amino-acid chain; its full sequence is Large ribosomal subunit protein uL29 (68 aa).

Belongs to the universal ribosomal protein uL29 family.

This is Large ribosomal subunit protein uL29 from Streptococcus pneumoniae (strain JJA).